A 72-amino-acid chain; its full sequence is Translation initiation factor IF-1 (72 aa).

An S1-like domain is found at 1 to 72 (MSKEEVLEFS…TKGRITYRYK (72 aa)).

This sequence belongs to the IF-1 family. Component of the 30S ribosomal translation pre-initiation complex which assembles on the 30S ribosome in the order IF-2 and IF-3, IF-1 and N-formylmethionyl-tRNA(fMet); mRNA recruitment can occur at any time during PIC assembly.

The protein localises to the cytoplasm. In terms of biological role, one of the essential components for the initiation of protein synthesis. Stabilizes the binding of IF-2 and IF-3 on the 30S subunit to which N-formylmethionyl-tRNA(fMet) subsequently binds. Helps modulate mRNA selection, yielding the 30S pre-initiation complex (PIC). Upon addition of the 50S ribosomal subunit IF-1, IF-2 and IF-3 are released leaving the mature 70S translation initiation complex. This is Translation initiation factor IF-1 from Bartonella bacilliformis (strain ATCC 35685 / KC583 / Herrer 020/F12,63).